Consider the following 341-residue polypeptide: L-threonine 3-dehydrogenase (341 aa).

Cys-38 is a binding site for Zn(2+). Active-site charge relay system residues include Thr-40 and His-43. Zn(2+) is bound by residues His-63, Glu-64, Cys-93, Cys-96, Cys-99, and Cys-107. NAD(+)-binding positions include Ile-175, Asp-195, Arg-200, 262–264 (LGI), and 286–287 (IY).

Belongs to the zinc-containing alcohol dehydrogenase family. Homotetramer. Requires Zn(2+) as cofactor.

Its subcellular location is the cytoplasm. The enzyme catalyses L-threonine + NAD(+) = (2S)-2-amino-3-oxobutanoate + NADH + H(+). Its pathway is amino-acid degradation; L-threonine degradation via oxydo-reductase pathway; glycine from L-threonine: step 1/2. Functionally, catalyzes the NAD(+)-dependent oxidation of L-threonine to 2-amino-3-ketobutyrate. This Shewanella sp. (strain W3-18-1) protein is L-threonine 3-dehydrogenase.